Consider the following 1201-residue polypeptide: DNA-directed RNA polymerase subunit beta' (1201 aa).

Residues C60, C62, C75, and C78 each coordinate Zn(2+). Mg(2+)-binding residues include D449, D451, and D453. Positions 818, 892, 899, and 902 each coordinate Zn(2+).

This sequence belongs to the RNA polymerase beta' chain family. As to quaternary structure, the RNAP catalytic core consists of 2 alpha, 1 beta, 1 beta' and 1 omega subunit. When a sigma factor is associated with the core the holoenzyme is formed, which can initiate transcription. The cofactor is Mg(2+). Zn(2+) is required as a cofactor.

The catalysed reaction is RNA(n) + a ribonucleoside 5'-triphosphate = RNA(n+1) + diphosphate. Its function is as follows. DNA-dependent RNA polymerase catalyzes the transcription of DNA into RNA using the four ribonucleoside triphosphates as substrates. The protein is DNA-directed RNA polymerase subunit beta' of Listeria monocytogenes serovar 1/2a (strain ATCC BAA-679 / EGD-e).